The sequence spans 112 residues: UPF0102 protein C8J_0145 (112 aa).

It belongs to the UPF0102 family.

This chain is UPF0102 protein C8J_0145, found in Campylobacter jejuni subsp. jejuni serotype O:6 (strain 81116 / NCTC 11828).